A 478-amino-acid polypeptide reads, in one-letter code: Siroheme synthase (478 aa).

A precorrin-2 dehydrogenase /sirohydrochlorin ferrochelatase region spans residues 1–207; that stretch reads MTANVLFPLF…QRHAEAEAVL (207 aa). NAD(+) contacts are provided by residues 25–26 and 46–47; these read KV and PS. A Phosphoserine modification is found at Ser132. The interval 220 to 478 is uroporphyrinogen-III C-methyltransferase; that stretch reads GSVTLVGAGA…PCPPRTHPIS (259 aa). The active-site Proton acceptor is the Asp252. The active-site Proton donor is Lys274. S-adenosyl-L-methionine contacts are provided by residues 305–307, Val310, 335–336, Met387, and Gly416; these read GGD and TA.

This sequence in the N-terminal section; belongs to the precorrin-2 dehydrogenase / sirohydrochlorin ferrochelatase family. It in the C-terminal section; belongs to the precorrin methyltransferase family.

The catalysed reaction is uroporphyrinogen III + 2 S-adenosyl-L-methionine = precorrin-2 + 2 S-adenosyl-L-homocysteine + H(+). It catalyses the reaction precorrin-2 + NAD(+) = sirohydrochlorin + NADH + 2 H(+). It carries out the reaction siroheme + 2 H(+) = sirohydrochlorin + Fe(2+). It participates in cofactor biosynthesis; adenosylcobalamin biosynthesis; precorrin-2 from uroporphyrinogen III: step 1/1. It functions in the pathway cofactor biosynthesis; adenosylcobalamin biosynthesis; sirohydrochlorin from precorrin-2: step 1/1. The protein operates within porphyrin-containing compound metabolism; siroheme biosynthesis; precorrin-2 from uroporphyrinogen III: step 1/1. Its pathway is porphyrin-containing compound metabolism; siroheme biosynthesis; siroheme from sirohydrochlorin: step 1/1. It participates in porphyrin-containing compound metabolism; siroheme biosynthesis; sirohydrochlorin from precorrin-2: step 1/1. Its function is as follows. Multifunctional enzyme that catalyzes the SAM-dependent methylations of uroporphyrinogen III at position C-2 and C-7 to form precorrin-2 via precorrin-1. Then it catalyzes the NAD-dependent ring dehydrogenation of precorrin-2 to yield sirohydrochlorin. Finally, it catalyzes the ferrochelation of sirohydrochlorin to yield siroheme. The polypeptide is Siroheme synthase (Xylella fastidiosa (strain M23)).